Consider the following 130-residue polypeptide: UPF0251 protein MmarC7_1642 (130 aa).

Belongs to the UPF0251 family.

The protein is UPF0251 protein MmarC7_1642 of Methanococcus maripaludis (strain C7 / ATCC BAA-1331).